We begin with the raw amino-acid sequence, 362 residues long: dTDP-glucose 4,6-dehydratase (362 aa).

NAD(+)-binding positions include 11 to 12 (FI), 32 to 35 (DKLT), 58 to 59 (DI), 80 to 84 (LAAES), and threonine 99. Serine 84 provides a ligand contact to substrate. A substrate-binding site is contributed by threonine 133. The Proton donor role is filled by aspartate 134. Catalysis depends on proton acceptor residues glutamate 135 and tyrosine 167. Residue 167 to 171 (YSASK) participates in NAD(+) binding. Asparagine 196 contributes to the substrate binding site. An NAD(+)-binding site is contributed by asparagine 197. Residues 206–207 (KL), 222–224 (PVY), arginine 231, asparagine 266, and 300–304 (DRPGH) contribute to the substrate site.

It belongs to the NAD(P)-dependent epimerase/dehydratase family. dTDP-glucose dehydratase subfamily. Requires NAD(+) as cofactor.

The enzyme catalyses dTDP-alpha-D-glucose = dTDP-4-dehydro-6-deoxy-alpha-D-glucose + H2O. Its pathway is bacterial outer membrane biogenesis; LPS O-antigen biosynthesis. Catalyzes the dehydration of dTDP-D-glucose to form dTDP-4-dehydro-6-deoxy-D-glucose via a three-step process involving oxidation, dehydration and reduction. This reaction is a step in the biosynthesis of D-fucofuranose, a component of E.coli O52 O antigen. This Escherichia coli protein is dTDP-glucose 4,6-dehydratase (rmlB).